The primary structure comprises 100 residues: Co-chaperonin GroES (100 aa).

This sequence belongs to the GroES chaperonin family. Heptamer of 7 subunits arranged in a ring. Interacts with the chaperonin GroEL.

The protein resides in the cytoplasm. Its function is as follows. Together with the chaperonin GroEL, plays an essential role in assisting protein folding. The GroEL-GroES system forms a nano-cage that allows encapsulation of the non-native substrate proteins and provides a physical environment optimized to promote and accelerate protein folding. GroES binds to the apical surface of the GroEL ring, thereby capping the opening of the GroEL channel. In Mycobacterium marinum (strain ATCC BAA-535 / M), this protein is Co-chaperonin GroES.